The following is a 105-amino-acid chain: MTTETISGITLTTKANVYFDGKCISHGFTLADGTKKSAGVVLPSQLTFGTAAAEIMECVAGSCEYKLDGSDQWLTSKAGESFQVPANSKFDIRVTEAYHYICHYA.

Belongs to the nucleoside phosphorylase PpnP family.

The catalysed reaction is a purine D-ribonucleoside + phosphate = a purine nucleobase + alpha-D-ribose 1-phosphate. It carries out the reaction adenosine + phosphate = alpha-D-ribose 1-phosphate + adenine. The enzyme catalyses cytidine + phosphate = cytosine + alpha-D-ribose 1-phosphate. It catalyses the reaction guanosine + phosphate = alpha-D-ribose 1-phosphate + guanine. The catalysed reaction is inosine + phosphate = alpha-D-ribose 1-phosphate + hypoxanthine. It carries out the reaction thymidine + phosphate = 2-deoxy-alpha-D-ribose 1-phosphate + thymine. The enzyme catalyses uridine + phosphate = alpha-D-ribose 1-phosphate + uracil. It catalyses the reaction xanthosine + phosphate = alpha-D-ribose 1-phosphate + xanthine. Catalyzes the phosphorolysis of diverse nucleosides, yielding D-ribose 1-phosphate and the respective free bases. Can use uridine, adenosine, guanosine, cytidine, thymidine, inosine and xanthosine as substrates. Also catalyzes the reverse reactions. The protein is Pyrimidine/purine nucleoside phosphorylase of Delftia acidovorans (strain DSM 14801 / SPH-1).